The following is a 1004-amino-acid chain: Zinc finger protein 316 (1004 aa).

Residues 1–148 (MAALHTTPDS…EEEEDEDEDD (148 aa)) form a disordered region. Ala2 is modified (N-acetylalanine). Thr7 is modified (phosphothreonine). The residue at position 10 (Ser10) is a Phosphoserine. Residues 21 to 60 (GSECDPDQEEEEEEEEKGEEVQEVEEEEEEIVVEEEEEGV) are compositionally biased toward acidic residues. Residues 61–72 (AEVVQDAQVEAV) are compositionally biased toward low complexity. Positions 73-95 (AEVEVEADVEEEDVKEVLAEEEC) are enriched in acidic residues. Position 112 is a phosphoserine (Ser112). Residues 132–148 (EDLEEEEEEEEDEDEDD) are compositionally biased toward acidic residues. In terms of domain architecture, KRAB spans 158–229 (VTFEDVAVYF…DSPRPEEGDI (72 aa)). 5 consecutive C2H2-type zinc fingers follow at residues 345–367 (TTCDVCGKVFPHRSRLAKHQRYH), 373–395 (FGCEECGKGFVYRSHLAIHQRTH), 401–423 (FPCPDCGKRFVYKSHLVTHRRIH), 429–451 (YRCAFCGAGFGRRSYLVTHQRTH), and 457–479 (YPCSHCGRSFSQSSALARHQAVH). A C2H2-type 6; degenerate zinc finger spans residues 485–512 (HCCPDCGQAFRLRADFQRHRRGGGCAEA). A disordered region spans residues 508–574 (GCAEAGGDGP…TPSGKVDPAP (67 aa)). Residues 531 to 557 (EDTDPGPEGSEVGEADGEAEAAAEERE) show a composition bias toward acidic residues. C2H2-type zinc fingers lie at residues 691–713 (WICSDCGKTFGRRAALAKHQRYH), 719–741 (HRCADCGKSFVYGSHLARHRRTH), 747–769 (FPCPECGARFARGSHLAAHVRGH), 775–797 (FVCGVCGAGFSRRAHLTAHGRAH), and 803–825 (YACGECGRRFGQSAALTRHQWAH). Lys829 is covalently cross-linked (Glycyl lysine isopeptide (Lys-Gly) (interchain with G-Cter in SUMO2)). C2H2-type zinc fingers lie at residues 831-853 (HRCPDCGKGFGHSSDFKRHRRTH), 859-881 (FRCADCGRGFAQRSNLAKHRRGH), 887-909 (FPCPECGKRFSQRSVLVTHQRTH), and 915-937 (YACANCGRRFSQSSHLLTHMKTH). Positions 936-976 (THRGATAAPGSGSAPAPAPKPEAAAKGPSSAGPGERGSALL) are disordered. Over residues 939–968 (GATAAPGSGSAPAPAPKPEAAAKGPSSAGP) the composition is skewed to low complexity. Residue Lys955 forms a Glycyl lysine isopeptide (Lys-Gly) (interchain with G-Cter in SUMO2) linkage.

The protein belongs to the krueppel C2H2-type zinc-finger protein family.

Its subcellular location is the nucleus. May be involved in transcriptional regulation. In Homo sapiens (Human), this protein is Zinc finger protein 316 (ZNF316).